Here is a 295-residue protein sequence, read N- to C-terminus: Putative NADH-ubiquinone oxidoreductase MJ0520 (295 aa).

Helical transmembrane passes span 8 to 28, 69 to 89, 129 to 149, 163 to 183, 199 to 219, 220 to 240, 243 to 263, and 273 to 293; these read LIGA…LLGL, LYIF…IIAI, VFSA…YLTT, IHGS…ILLV, IVSG…YIAE, AIAY…PLVI, PVLT…VNGL, and VMLQ…RLIV.

The protein belongs to the complex I subunit 1 family.

Its subcellular location is the cell membrane. It catalyses the reaction a ubiquinone + NADH + 5 H(+)(in) = a ubiquinol + NAD(+) + 4 H(+)(out). In Methanocaldococcus jannaschii (strain ATCC 43067 / DSM 2661 / JAL-1 / JCM 10045 / NBRC 100440) (Methanococcus jannaschii), this protein is Putative NADH-ubiquinone oxidoreductase MJ0520.